The chain runs to 647 residues: Methyl-accepting chemotaxis protein McpK (647 aa).

Over 1-16 the chain is Cytoplasmic; it reads MYDWWVLQLAKLSVSR. A helical transmembrane segment spans residues 17-37; it reads KLMVGFGVLLALLLLVVISSN. Residues 38 to 291 lie on the Periplasmic side of the membrane; sequence RTLTHQTALS…LRESTASRDR (254 aa). The region spanning 45–287 is the HBM domain; the sequence is ALSEQLAEVA…AGRQLRESTA (243 aa). A helical membrane pass occupies residues 292–312; sequence ASLWLIAALALAFGCVAGWAI. Residues 313–647 lie on the Cytoplasmic side of the membrane; that stretch reads NRQIVRPLDE…LQAQVGRFRL (335 aa). Residues 314-370 enclose the HAMP domain; it reads RQIVRPLDEALAQAEAIAAGDLGKRPQNPLTLQRRDELGQLQRVMQRMGDSLRELVG. The Methyl-accepting transducer domain occupies 375-611; sequence GVSQLASSAE…EINRSVLSVR (237 aa).

This sequence belongs to the methyl-accepting chemotaxis (MCP) protein family. In terms of assembly, ligand free ligand-binding domain (LBD) is present in a monomer-dimer equilibrium. AlphaKG binding stabilizes the homodimer.

The protein resides in the cell inner membrane. Its function is as follows. Chemotactic-signal transducers respond to changes in the concentration of attractants and repellents in the environment, transduce a signal from the outside to the inside of the cell, and facilitate sensory adaptation through the variation of the level of methylation. McpK is a chemoreceptor that specifically binds and mediates chemotaxis to alpha-ketoglutarate (alphaKG). The protein is Methyl-accepting chemotaxis protein McpK of Pseudomonas aeruginosa (strain ATCC 15692 / DSM 22644 / CIP 104116 / JCM 14847 / LMG 12228 / 1C / PRS 101 / PAO1).